Consider the following 325-residue polypeptide: Aquaporin-8 (325 aa).

Topologically, residues 1-10 (MALRSPARDY) are cytoplasmic. Residues 11–31 (LVSMIGELVGTFLFLFFAFAA) traverse the membrane as a helical segment. Residues 32-52 (AQTANQPNGTKPLTPNATDTS) are Extracellular-facing. N-linked (GlcNAc...) asparagine glycosylation is found at Asn39 and Asn47. A helical membrane pass occupies residues 53 to 73 (KLLYIALAFGASLAANVWVFF). Topologically, residues 74–100 (RVSGGQFNPAVTLALVLIRAVSPTKAL) are cytoplasmic. An NPA 1 motif is present at residues 81 to 83 (NPA). The chain crosses the membrane as a helical span at residues 101–121 (ILIPAQLVGGSLAAAAVKGII). Residues 122 to 140 (PGDDILFAVSLGPGVANVQ) are Extracellular-facing. Residues 141-161 (GLFIELLLTFMLVFTILMLVA) form a helical membrane-spanning segment. Over 162–167 (EKTKST) the chain is Cytoplasmic. The chain crosses the membrane as a helical span at residues 168–188 (FVAPIGIGFSLFIGHLVGIFW). Over 189–212 (TGAGINPARAFSPALIQASFPSYH) the chain is Extracellular. The NPA 2 motif lies at 194–196 (NPA). The chain crosses the membrane as a helical span at residues 213–233 (WIYWLGPALGSFLAAGLYLGL). Residues 234–325 (KEMKYELVGG…GSPDSTDLPT (92 aa)) lie on the Cytoplasmic side of the membrane. Disordered stretches follow at residues 279-298 (LGQF…LERG) and 305-325 (EDDP…DLPT). A compositionally biased stretch (basic and acidic residues) spans 286–298 (TEGHRSPVDLERG).

It belongs to the MIP/aquaporin (TC 1.A.8) family.

Its subcellular location is the cell membrane. It carries out the reaction H2O2(out) = H2O2(in). It catalyses the reaction H2O(in) = H2O(out). In terms of biological role, plasma membrane water channel that regulates the reactive oxygen species (ROS)-signaling pathway through its capacity to act as a membrane channel for hydrogen peroxide uptake. Required for the formation of infection structures and infection, especially on host leaves where it is essential for the penetration into the host. Regulates the expression of proteins related to redox-regulation and intracellular signal transduction and plays a role in the distribution of mitochondria in the hyphae. The chain is Aquaporin-8 from Botryotinia fuckeliana (strain B05.10) (Noble rot fungus).